The primary structure comprises 230 residues: Ribonuclease 3 (230 aa).

The 134-residue stretch at 1-134 (MKQLEELLST…FLGALLLDKG (134 aa)) folds into the RNase III domain. Position 47 (glutamate 47) interacts with Mg(2+). The active site involves aspartate 51. Mg(2+) is bound by residues aspartate 120 and glutamate 123. Residue glutamate 123 is part of the active site. In terms of domain architecture, DRBM spans 160–229 (DYKTCLQEFL…AKNALAQLSE (70 aa)).

Belongs to the ribonuclease III family. As to quaternary structure, homodimer. Requires Mg(2+) as cofactor.

Its subcellular location is the cytoplasm. It catalyses the reaction Endonucleolytic cleavage to 5'-phosphomonoester.. Its function is as follows. Digests double-stranded RNA. Involved in the processing of primary rRNA transcript to yield the immediate precursors to the large and small rRNAs (23S and 16S). Processes some mRNAs, and tRNAs when they are encoded in the rRNA operon. Processes pre-crRNA and tracrRNA of type II CRISPR loci if present in the organism. The protein is Ribonuclease 3 of Streptococcus pyogenes serotype M49 (strain NZ131).